The following is a 124-amino-acid chain: Large ribosomal subunit protein bL12 (124 aa).

Belongs to the bacterial ribosomal protein bL12 family. Homodimer. Part of the ribosomal stalk of the 50S ribosomal subunit. Forms a multimeric L10(L12)X complex, where L10 forms an elongated spine to which 2 to 4 L12 dimers bind in a sequential fashion. Binds GTP-bound translation factors.

In terms of biological role, forms part of the ribosomal stalk which helps the ribosome interact with GTP-bound translation factors. Is thus essential for accurate translation. In Cupriavidus metallidurans (strain ATCC 43123 / DSM 2839 / NBRC 102507 / CH34) (Ralstonia metallidurans), this protein is Large ribosomal subunit protein bL12.